The chain runs to 337 residues: GTP 3',8-cyclase (337 aa).

Positions 17–243 constitute a Radical SAM core domain; sequence PFQRQYYYLR…HKSHTDGPAK (227 aa). Position 26 (Arg-26) interacts with GTP. Positions 33 and 37 each coordinate [4Fe-4S] cluster. Tyr-39 lines the S-adenosyl-L-methionine pocket. Cys-40 contacts [4Fe-4S] cluster. A GTP-binding site is contributed by Arg-76. Position 80 (Gly-80) interacts with S-adenosyl-L-methionine. Thr-107 provides a ligand contact to GTP. Residue Ser-131 coordinates S-adenosyl-L-methionine. GTP is bound at residue Lys-168. Met-202 is a binding site for S-adenosyl-L-methionine. Residues Cys-265 and Cys-268 each contribute to the [4Fe-4S] cluster site. 270 to 272 provides a ligand contact to GTP; it reads RLR. Cys-282 contributes to the [4Fe-4S] cluster binding site.

The protein belongs to the radical SAM superfamily. MoaA family. As to quaternary structure, monomer and homodimer. Requires [4Fe-4S] cluster as cofactor.

It catalyses the reaction GTP + AH2 + S-adenosyl-L-methionine = (8S)-3',8-cyclo-7,8-dihydroguanosine 5'-triphosphate + 5'-deoxyadenosine + L-methionine + A + H(+). It participates in cofactor biosynthesis; molybdopterin biosynthesis. Catalyzes the cyclization of GTP to (8S)-3',8-cyclo-7,8-dihydroguanosine 5'-triphosphate. This chain is GTP 3',8-cyclase, found in Haemophilus influenzae (strain PittGG).